Here is a 383-residue protein sequence, read N- to C-terminus: Acetylornithine deacetylase (383 aa).

Residue histidine 80 coordinates Zn(2+). Aspartate 82 is an active-site residue. Zn(2+) is bound at residue aspartate 112. The active site involves glutamate 144. Positions 145, 169, and 355 each coordinate Zn(2+).

This sequence belongs to the peptidase M20A family. ArgE subfamily. As to quaternary structure, homodimer. Zn(2+) serves as cofactor. It depends on Co(2+) as a cofactor. Glutathione is required as a cofactor.

The protein resides in the cytoplasm. The catalysed reaction is N(2)-acetyl-L-ornithine + H2O = L-ornithine + acetate. It functions in the pathway amino-acid biosynthesis; L-arginine biosynthesis; L-ornithine from N(2)-acetyl-L-ornithine (linear): step 1/1. Its function is as follows. Catalyzes the hydrolysis of the amide bond of N(2)-acetylated L-amino acids. Cleaves the acetyl group from N-acetyl-L-ornithine to form L-ornithine, an intermediate in L-arginine biosynthesis pathway, and a branchpoint in the synthesis of polyamines. The sequence is that of Acetylornithine deacetylase from Salmonella arizonae (strain ATCC BAA-731 / CDC346-86 / RSK2980).